The following is a 62-amino-acid chain: Photosystem II reaction center protein Z (62 aa).

2 helical membrane passes run 8-28 (TMFA…ITFA) and 41-61 (FSGV…NSFI).

It belongs to the PsbZ family. In terms of assembly, PSII is composed of 1 copy each of membrane proteins PsbA, PsbB, PsbC, PsbD, PsbE, PsbF, PsbH, PsbI, PsbJ, PsbK, PsbL, PsbM, PsbT, PsbY, PsbZ, Psb30/Ycf12, at least 3 peripheral proteins of the oxygen-evolving complex and a large number of cofactors. It forms dimeric complexes.

Its subcellular location is the plastid. The protein resides in the chloroplast thylakoid membrane. May control the interaction of photosystem II (PSII) cores with the light-harvesting antenna, regulates electron flow through the 2 photosystem reaction centers. PSII is a light-driven water plastoquinone oxidoreductase, using light energy to abstract electrons from H(2)O, generating a proton gradient subsequently used for ATP formation. The protein is Photosystem II reaction center protein Z of Welwitschia mirabilis (Tree tumbo).